We begin with the raw amino-acid sequence, 432 residues long: Glutamate-1-semialdehyde 2,1-aminomutase (432 aa).

Position 265 is an N6-(pyridoxal phosphate)lysine (Lys265).

The protein belongs to the class-III pyridoxal-phosphate-dependent aminotransferase family. HemL subfamily. Homodimer. Pyridoxal 5'-phosphate is required as a cofactor.

Its subcellular location is the cytoplasm. It carries out the reaction (S)-4-amino-5-oxopentanoate = 5-aminolevulinate. Its pathway is porphyrin-containing compound metabolism; protoporphyrin-IX biosynthesis; 5-aminolevulinate from L-glutamyl-tRNA(Glu): step 2/2. This is Glutamate-1-semialdehyde 2,1-aminomutase from Photobacterium profundum (strain SS9).